A 407-amino-acid polypeptide reads, in one-letter code: 5-aminolevulinate synthase 1 (407 aa).

Residues arginine 21, serine 137, and lysine 156 each coordinate substrate. Residues serine 189, histidine 217, and threonine 245 each coordinate pyridoxal 5'-phosphate. The active site involves lysine 248. An N6-(pyridoxal phosphate)lysine modification is found at lysine 248. Pyridoxal 5'-phosphate is bound by residues serine 277 and threonine 278. Threonine 363 contributes to the substrate binding site.

Belongs to the class-II pyridoxal-phosphate-dependent aminotransferase family. As to quaternary structure, homodimer. The cofactor is pyridoxal 5'-phosphate.

It carries out the reaction succinyl-CoA + glycine + H(+) = 5-aminolevulinate + CO2 + CoA. It participates in porphyrin-containing compound metabolism; protoporphyrin-IX biosynthesis; 5-aminolevulinate from glycine: step 1/1. In Cereibacter sphaeroides (strain ATCC 17023 / DSM 158 / JCM 6121 / CCUG 31486 / LMG 2827 / NBRC 12203 / NCIMB 8253 / ATH 2.4.1.) (Rhodobacter sphaeroides), this protein is 5-aminolevulinate synthase 1 (hemA).